The primary structure comprises 409 residues: uncharacterized protein (409 aa).

This sequence belongs to the mimivirus L17x/L18x family.

This is an uncharacterized protein from Acanthamoeba polyphaga mimivirus (APMV).